A 286-amino-acid polypeptide reads, in one-letter code: Phosphonates import ATP-binding protein PhnC (286 aa).

Residues 3–246 (FHLKQVTRRF…AVTEIYGTDS (244 aa)) form the ABC transporter domain. Residue 35–42 (GRSGAGKS) participates in ATP binding.

It belongs to the ABC transporter superfamily. Phosphonates importer (TC 3.A.1.9.1) family. The complex is composed of two ATP-binding proteins (PhnC), two transmembrane proteins (PhnE) and a solute-binding protein (PhnD).

The protein localises to the cell inner membrane. The catalysed reaction is phosphonate(out) + ATP + H2O = phosphonate(in) + ADP + phosphate + H(+). Its function is as follows. Part of the ABC transporter complex PhnCDE involved in phosphonates import. Responsible for energy coupling to the transport system. This Agrobacterium fabrum (strain C58 / ATCC 33970) (Agrobacterium tumefaciens (strain C58)) protein is Phosphonates import ATP-binding protein PhnC.